The primary structure comprises 432 residues: Glutamate-1-semialdehyde 2,1-aminomutase 1 (432 aa).

K268 is modified (N6-(pyridoxal phosphate)lysine).

This sequence belongs to the class-III pyridoxal-phosphate-dependent aminotransferase family. HemL subfamily. As to quaternary structure, homodimer. The cofactor is pyridoxal 5'-phosphate.

It localises to the cytoplasm. The catalysed reaction is (S)-4-amino-5-oxopentanoate = 5-aminolevulinate. The protein operates within porphyrin-containing compound metabolism; protoporphyrin-IX biosynthesis; 5-aminolevulinate from L-glutamyl-tRNA(Glu): step 2/2. In Bacillus cereus (strain B4264), this protein is Glutamate-1-semialdehyde 2,1-aminomutase 1.